The chain runs to 994 residues: Chromatin modification-related protein vid21 (994 aa).

Disordered regions lie at residues 122 to 275 and 288 to 308; these read PDNL…APPV and PKVD…ENDV. Basic and acidic residues-rich tracts occupy residues 158–171, 178–191, 204–233, 254–265, and 288–305; these read TIHK…KETI, KEVE…EEKG, LTEE…KEHE, VESKEVKKKEVS, and PKVD…KVTE. Phosphoserine is present on residues serine 298 and serine 378. One can recognise an HSA domain in the interval 475 to 548; that stretch reads PKRQNEMPRL…SKNKKPYMQE (74 aa). Residues 671–693 are disordered; it reads SFMEKKARSDENQLDGNKIKDDN. Basic and acidic residues predominate over residues 672-693; the sequence is FMEKKARSDENQLDGNKIKDDN. Positions 713-773 constitute a Myb-like domain; it reads KDIRPEAPWL…DCFERWIQVD (61 aa). Disordered stretches follow at residues 857–880 and 975–994; these read TMTK…PSPL and EQIH…ERTQ. A coiled-coil region spans residues 880–912; it reads LELSRLKSEREAQIQQIQAQRNFAQLQSQNRAL.

This sequence belongs to the EAF1 family. In terms of assembly, component of the NuA4 histone acetyltransferase complex.

The protein resides in the nucleus. In terms of biological role, component of the NuA4 histone acetyltransferase complex which is involved in transcriptional activation of selected genes principally by acetylation of nucleosomal histone H4 and H2A. The NuA4 complex is also involved in DNA repair. This chain is Chromatin modification-related protein vid21 (vid21), found in Schizosaccharomyces pombe (strain 972 / ATCC 24843) (Fission yeast).